The primary structure comprises 174 residues: Putative NADH dehydrogenase/NAD(P)H nitroreductase AF_2267 (174 aa).

107 to 112 (AARCLG) contacts NAD(+).

Belongs to the nitroreductase family. Requires FMN as cofactor.

In Archaeoglobus fulgidus (strain ATCC 49558 / DSM 4304 / JCM 9628 / NBRC 100126 / VC-16), this protein is Putative NADH dehydrogenase/NAD(P)H nitroreductase AF_2267.